A 386-amino-acid polypeptide reads, in one-letter code: 8-amino-7-oxononanoate synthase (386 aa).

Residue Arg-26 participates in substrate binding. Gly-104–Tyr-105 contributes to the pyridoxal 5'-phosphate binding site. His-129 is a binding site for substrate. Pyridoxal 5'-phosphate-binding residues include Ser-176, His-204, and Thr-232. Lys-235 is subject to N6-(pyridoxal phosphate)lysine. Thr-349 contributes to the substrate binding site.

Belongs to the class-II pyridoxal-phosphate-dependent aminotransferase family. BioF subfamily. As to quaternary structure, homodimer. The cofactor is pyridoxal 5'-phosphate.

The enzyme catalyses 6-carboxyhexanoyl-[ACP] + L-alanine + H(+) = (8S)-8-amino-7-oxononanoate + holo-[ACP] + CO2. Its pathway is cofactor biosynthesis; biotin biosynthesis. Functionally, catalyzes the decarboxylative condensation of pimeloyl-[acyl-carrier protein] and L-alanine to produce 8-amino-7-oxononanoate (AON), [acyl-carrier protein], and carbon dioxide. This Chromohalobacter salexigens (strain ATCC BAA-138 / DSM 3043 / CIP 106854 / NCIMB 13768 / 1H11) protein is 8-amino-7-oxononanoate synthase.